The primary structure comprises 458 residues: Probable threonine--tRNA ligase, cytoplasmic (458 aa).

The TGS domain occupies 41–104 (DPIKITLLPD…EGDCSLEIFG (64 aa)).

Belongs to the class-II aminoacyl-tRNA synthetase family.

The protein localises to the cytoplasm. It carries out the reaction tRNA(Thr) + L-threonine + ATP = L-threonyl-tRNA(Thr) + AMP + diphosphate + H(+). This Arabidopsis thaliana (Mouse-ear cress) protein is Probable threonine--tRNA ligase, cytoplasmic.